A 207-amino-acid chain; its full sequence is Ribosome maturation factor RimM (207 aa).

The PRC barrel domain maps to 130-207 (EDEFYWVDLI…RIVVDWGLDY (78 aa)).

It belongs to the RimM family. In terms of assembly, binds ribosomal protein uS19.

Its subcellular location is the cytoplasm. In terms of biological role, an accessory protein needed during the final step in the assembly of 30S ribosomal subunit, possibly for assembly of the head region. Essential for efficient processing of 16S rRNA. May be needed both before and after RbfA during the maturation of 16S rRNA. It has affinity for free ribosomal 30S subunits but not for 70S ribosomes. The polypeptide is Ribosome maturation factor RimM (Cupriavidus taiwanensis (strain DSM 17343 / BCRC 17206 / CCUG 44338 / CIP 107171 / LMG 19424 / R1) (Ralstonia taiwanensis (strain LMG 19424))).